The chain runs to 133 residues: Large ribosomal subunit protein bL19 (133 aa).

It belongs to the bacterial ribosomal protein bL19 family.

In terms of biological role, this protein is located at the 30S-50S ribosomal subunit interface and may play a role in the structure and function of the aminoacyl-tRNA binding site. This is Large ribosomal subunit protein bL19 from Sulfurihydrogenibium sp. (strain YO3AOP1).